The sequence spans 229 residues: Large ribosomal subunit protein uL1 (229 aa).

The protein belongs to the universal ribosomal protein uL1 family. Part of the 50S ribosomal subunit.

Its function is as follows. Binds directly to 23S rRNA. The L1 stalk is quite mobile in the ribosome, and is involved in E site tRNA release. Functionally, protein L1 is also a translational repressor protein, it controls the translation of the L11 operon by binding to its mRNA. The polypeptide is Large ribosomal subunit protein uL1 (Chlorobium phaeobacteroides (strain DSM 266 / SMG 266 / 2430)).